The following is a 510-amino-acid chain: Ankyrin repeat domain-containing protein 13C-A (510 aa).

Residues 1 to 19 show a composition bias toward basic and acidic residues; that stretch reads MTGEKIRSLHKDQKPSKDE. Residues 1–35 are disordered; sequence MTGEKIRSLHKDQKPSKDEDLLEPDEEATAGGTFT. ANK repeat units follow at residues 80–111, 112–141, and 145–174; these read DVYF…QKDS, HGNT…PVKV, and QGWS…QQSR.

The protein localises to the endoplasmic reticulum membrane. Functionally, acts as a molecular chaperone for G protein-coupled receptors, regulating their biogenesis and exit from the ER. This chain is Ankyrin repeat domain-containing protein 13C-A (ankrd13c-a), found in Xenopus laevis (African clawed frog).